The sequence spans 299 residues: tRNA-cytidine(32) 2-sulfurtransferase (299 aa).

The short motif at 56–61 (SGGKDS) is the PP-loop motif element. 3 residues coordinate [4Fe-4S] cluster: cysteine 131, cysteine 134, and cysteine 222.

This sequence belongs to the TtcA family. In terms of assembly, homodimer. Requires Mg(2+) as cofactor. [4Fe-4S] cluster serves as cofactor.

The protein resides in the cytoplasm. The enzyme catalyses cytidine(32) in tRNA + S-sulfanyl-L-cysteinyl-[cysteine desulfurase] + AH2 + ATP = 2-thiocytidine(32) in tRNA + L-cysteinyl-[cysteine desulfurase] + A + AMP + diphosphate + H(+). It functions in the pathway tRNA modification. Its function is as follows. Catalyzes the ATP-dependent 2-thiolation of cytidine in position 32 of tRNA, to form 2-thiocytidine (s(2)C32). The sulfur atoms are provided by the cysteine/cysteine desulfurase (IscS) system. The protein is tRNA-cytidine(32) 2-sulfurtransferase of Xylella fastidiosa (strain M23).